Consider the following 807-residue polypeptide: Glycerol-3-phosphate acyltransferase (807 aa).

Positions C308 to M313 match the HXXXXD motif motif.

The protein belongs to the GPAT/DAPAT family.

It localises to the cell inner membrane. It catalyses the reaction sn-glycerol 3-phosphate + an acyl-CoA = a 1-acyl-sn-glycero-3-phosphate + CoA. It participates in phospholipid metabolism; CDP-diacylglycerol biosynthesis; CDP-diacylglycerol from sn-glycerol 3-phosphate: step 1/3. The polypeptide is Glycerol-3-phosphate acyltransferase (Shewanella baltica (strain OS223)).